The sequence spans 577 residues: 2-succinyl-5-enolpyruvyl-6-hydroxy-3-cyclohexene-1-carboxylate synthase (577 aa).

Belongs to the TPP enzyme family. MenD subfamily. Homodimer. Requires Mg(2+) as cofactor. Mn(2+) serves as cofactor. The cofactor is thiamine diphosphate.

The enzyme catalyses isochorismate + 2-oxoglutarate + H(+) = 5-enolpyruvoyl-6-hydroxy-2-succinyl-cyclohex-3-ene-1-carboxylate + CO2. It functions in the pathway quinol/quinone metabolism; 1,4-dihydroxy-2-naphthoate biosynthesis; 1,4-dihydroxy-2-naphthoate from chorismate: step 2/7. The protein operates within cofactor biosynthesis; phylloquinone biosynthesis. Functionally, catalyzes the thiamine diphosphate-dependent decarboxylation of 2-oxoglutarate and the subsequent addition of the resulting succinic semialdehyde-thiamine pyrophosphate anion to isochorismate to yield 2-succinyl-5-enolpyruvyl-6-hydroxy-3-cyclohexene-1-carboxylate (SEPHCHC). The chain is 2-succinyl-5-enolpyruvyl-6-hydroxy-3-cyclohexene-1-carboxylate synthase from Synechococcus sp. (strain CC9311).